We begin with the raw amino-acid sequence, 190 residues long: Elongation factor P-like protein (190 aa).

Belongs to the elongation factor P family.

The sequence is that of Elongation factor P-like protein from Pectobacterium atrosepticum (strain SCRI 1043 / ATCC BAA-672) (Erwinia carotovora subsp. atroseptica).